The chain runs to 178 residues: MADEGDVLTDLDMDPAAGGNGADNRPTAGFITQYIKDMSVENPNAPGVYQWQEQPQIDLQFNIGANAVNEEVTEVELKINVEAKTDQGALYIIELVYAGLVGIRNLGDDQAHMFVYAEAPRILFPFARRVIADATRDLGFQPLMLDPIDFNGLYMQRLQQKAAEEAQGEGGETPAGDA.

Positions 1–13 (MADEGDVLTDLDM) are enriched in acidic residues. The tract at residues 1–25 (MADEGDVLTDLDMDPAAGGNGADNR) is disordered.

The protein belongs to the SecB family. In terms of assembly, homotetramer, a dimer of dimers. One homotetramer interacts with 1 SecA dimer.

The protein resides in the cytoplasm. In terms of biological role, one of the proteins required for the normal export of preproteins out of the cell cytoplasm. It is a molecular chaperone that binds to a subset of precursor proteins, maintaining them in a translocation-competent state. It also specifically binds to its receptor SecA. The chain is Protein-export protein SecB from Erythrobacter litoralis (strain HTCC2594).